We begin with the raw amino-acid sequence, 166 residues long: Telethonin (166 aa).

Ser-39 carries the post-translational modification Phosphoserine. Residues 145–166 form a disordered region; the sequence is VSKPGTLRRSLSRSMSQEAQRG. The segment covering 156 to 166 has biased composition (polar residues); the sequence is SRSMSQEAQRG.

In terms of assembly, interacts with MYOZ1, MYOZ2 and MYOZ3. Interacts with CSRP3. Interacts directly with the N-terminal Ig-like domains of 2 titin (TTN) molecules. Interacts with ANKRD2; the interaction is direct.

The protein localises to the cytoplasm. It localises to the myofibril. Its subcellular location is the sarcomere. In terms of biological role, muscle assembly regulating factor. Mediates the antiparallel assembly of titin (TTN) molecules at the sarcomeric Z-disk. The sequence is that of Telethonin (TCAP) from Bos taurus (Bovine).